The following is a 345-amino-acid chain: NADH-quinone oxidoreductase subunit H (345 aa).

Residues 1–15 are Lumenal-facing; the sequence is MADFWATSLGQTLIL. A helical membrane pass occupies residues 16–35; the sequence is LAQGLGIIAFVMIGLLLLVW. Over 36–86 the chain is Cytoplasmic; that stretch reads GDRKIWAAVQMRKGPNVVGAFGLLQSVADAAKYVFKEIVVPAGVDKPVYFL. A helical transmembrane segment spans residues 87–106; sequence APMLSLVLALLAWVVVPFNE. The Lumenal portion of the chain corresponds to 107 to 110; sequence GWVM. The chain crosses the membrane as a helical span at residues 111-130; the sequence is ADINVAVLFVFAVSSLEVYG. Residues 131–156 are Cytoplasmic-facing; sequence VIMGGWASNSKYPFLGSLRSAAQMIS. Residues 157-176 form a helical membrane-spanning segment; it reads YEVSMGLIIVGVIISTGSMN. The Lumenal segment spans residues 177 to 191; the sequence is LSAIVEAQRGDFGLL. Residues 192 to 211 traverse the membrane as a helical segment; the sequence is NWYWLPHLPMVALFFISALA. Topologically, residues 212-245 are cytoplasmic; that stretch reads ETNRPPFDLPEAESELVAGFMVEYSSTPYLLFMA. The chain crosses the membrane as a helical span at residues 246-265; it reads GEYIAVWLMCALTSVLFFGG. Residues 266-276 lie on the Lumenal side of the membrane; it reads WLSPIPGVPDG. A helical transmembrane segment spans residues 277–296; the sequence is VLWMVAKMAAVFFVFAMVKA. The Cytoplasmic portion of the chain corresponds to 297–313; the sequence is IVPRYRYDQLMRIGWKV. Residues 314-333 traverse the membrane as a helical segment; it reads FLPLSLAWVVVVAFLAKFEV. At 334 to 345 the chain is on the lumenal side; it reads LGGFWARWSIGA.

It belongs to the complex I subunit 1 family. In terms of assembly, NDH-1 is composed of 14 different subunits. Subunits NuoA, H, J, K, L, M, N constitute the membrane sector of the complex.

The protein resides in the cellular chromatophore membrane. It carries out the reaction a quinone + NADH + 5 H(+)(in) = a quinol + NAD(+) + 4 H(+)(out). Functionally, NDH-1 shuttles electrons from NADH, via FMN and iron-sulfur (Fe-S) centers, to quinones in the respiratory chain. The immediate electron acceptor for the enzyme in this species is believed to be ubiquinone. Couples the redox reaction to proton translocation (for every two electrons transferred, four hydrogen ions are translocated across the cytoplasmic membrane), and thus conserves the redox energy in a proton gradient. This subunit may bind ubiquinone. This Rhodobacter capsulatus (Rhodopseudomonas capsulata) protein is NADH-quinone oxidoreductase subunit H.